We begin with the raw amino-acid sequence, 193 residues long: MKKEIILASNSPRRIDLLKHMGVDFKVVSPNVEEEGNGEKRSPVEVVKKNAIMKVQKVAEDYRNAIIIGADTVVVIDGEIIGKPTNEKDARRILRKLRGRYHFVFSGVAVMETPEDKVLVSVVRSKVKMRDYSEEEIERYIATGEPMDKAGAYGIQGKGALLVEKIEGDYYNIVGLPLVRLNSLLNRLGYSLL.

The Proton acceptor role is filled by aspartate 71.

It belongs to the Maf family. YhdE subfamily. A divalent metal cation serves as cofactor.

The protein resides in the cytoplasm. It catalyses the reaction dTTP + H2O = dTMP + diphosphate + H(+). The enzyme catalyses UTP + H2O = UMP + diphosphate + H(+). Its function is as follows. Nucleoside triphosphate pyrophosphatase that hydrolyzes dTTP and UTP. May have a dual role in cell division arrest and in preventing the incorporation of modified nucleotides into cellular nucleic acids. The sequence is that of dTTP/UTP pyrophosphatase from Dictyoglomus thermophilum (strain ATCC 35947 / DSM 3960 / H-6-12).